The chain runs to 819 residues: Meiotically up-regulated gene 45 protein (819 aa).

A helical membrane pass occupies residues 797-817 (AMCLLTLLIGIYLILQVVFIY).

It localises to the membrane. Functionally, has a role in meiosis. The polypeptide is Meiotically up-regulated gene 45 protein (mug45) (Schizosaccharomyces pombe (strain 972 / ATCC 24843) (Fission yeast)).